Here is a 369-residue protein sequence, read N- to C-terminus: Peptide chain release factor 2 (369 aa).

Position 249 is an N5-methylglutamine (Q249).

Belongs to the prokaryotic/mitochondrial release factor family. Post-translationally, methylated by PrmC. Methylation increases the termination efficiency of RF2.

Its subcellular location is the cytoplasm. Its function is as follows. Peptide chain release factor 2 directs the termination of translation in response to the peptide chain termination codons UGA and UAA. The chain is Peptide chain release factor 2 from Corynebacterium diphtheriae (strain ATCC 700971 / NCTC 13129 / Biotype gravis).